Reading from the N-terminus, the 347-residue chain is tRNA N6-adenosine threonylcarbamoyltransferase (347 aa).

Fe cation is bound by residues His115 and His119. Substrate is bound by residues 138 to 142, Asp171, Gly184, and Asn277; that span reads LVSGG. Asp305 contacts Fe cation.

It belongs to the KAE1 / TsaD family. It depends on Fe(2+) as a cofactor.

Its subcellular location is the cytoplasm. It carries out the reaction L-threonylcarbamoyladenylate + adenosine(37) in tRNA = N(6)-L-threonylcarbamoyladenosine(37) in tRNA + AMP + H(+). In terms of biological role, required for the formation of a threonylcarbamoyl group on adenosine at position 37 (t(6)A37) in tRNAs that read codons beginning with adenine. Is involved in the transfer of the threonylcarbamoyl moiety of threonylcarbamoyl-AMP (TC-AMP) to the N6 group of A37, together with TsaE and TsaB. TsaD likely plays a direct catalytic role in this reaction. This is tRNA N6-adenosine threonylcarbamoyltransferase from Polaromonas sp. (strain JS666 / ATCC BAA-500).